We begin with the raw amino-acid sequence, 102 residues long: MARYTYLVALVLLAICCQWGYCGAMAMPDEERYVRKEYNRDLLDWFNNVGVGQFSPGQVATLCRYPLILENSLGPSVPIRKRNSELINSLLSLPKNMNDAGK.

The first 24 residues, 1–24 (MARYTYLVALVLLAICCQWGYCGA), serve as a signal peptide directing secretion. At Ala-100 the chain carries Alanine amide.

This sequence belongs to the arthropod PDH family. Predominantly expressed in adult head. Expressed at higher level in males than in females. In adult brain, it is specifically expressed in the ventral lateral neurons (LNvs) as well as in 2-4 tritocerebral cells and 4-6 abdominal cells.

It is found in the secreted. In terms of biological role, neuropeptide PDF is the main transmitter regulating circadian locomotor rhythms. Required to maintain behavioral rhythms under constant conditions by coordinating pacemaker interactions in the circadian system. Together with CCHa1, involved in regulating intensity and periodicity of daytime activity, possibly by modulating rhythmic expression of circadian protein PER/period in a subset of clock neurons, but not TIM/timeless. Acts on small and large ventral lateral neurons to control sleep and regulates the state transition from sleep to wake. This is Protein PDF (Pdf) from Drosophila melanogaster (Fruit fly).